Here is an 802-residue protein sequence, read N- to C-terminus: Ribosomal protein S6 kinase alpha-5 (802 aa).

The span at 1–22 shows a compositional bias: gly residues; sequence MEEEGGSSGGAAGTSADGGDGG. The interval 1 to 23 is disordered; it reads MEEEGGSSGGAAGTSADGGDGGE. The 270-residue stretch at 49–318 folds into the Protein kinase 1 domain; that stretch reads FELLKVLGTG…ADEIKEHLFF (270 aa). ATP contacts are provided by residues 55-63 and Lys81; that span reads LGTGAYGKV. Asp177 serves as the catalytic Proton acceptor. Ser212 carries the post-translational modification Phosphoserine; by autocatalysis. The AGC-kinase C-terminal domain maps to 319–387; sequence QKINWDDLAA…VAPSILFKRN (69 aa). Ser360 is modified (phosphoserine; by MAPK1, MAPK3 and MAPK14). Ser376 and Ser381 each carry phosphoserine; by autocatalysis. In terms of domain architecture, Protein kinase 2 spans 426–687; that stretch reads DLKDKPLGEG…MSGLRYNEWL (262 aa). Residues 432 to 440 and Lys455 each bind ATP; that span reads LGEGSFSIC. Asp544 (proton acceptor) is an active-site residue. At Thr581 the chain carries Phosphothreonine; by MAPK1, MAPK3 and MAPK14. Phosphoserine is present on residues Ser647, Ser657, Ser691, and Ser695. Position 700 is a phosphothreonine; by MAPK1, MAPK3 and MAPK14 (Thr700). The disordered stretch occupies residues 741 to 802; it reads AKRRKMKKTS…TLFQFSDSVA (62 aa). Residues 749-779 show a composition bias toward low complexity; it reads TSTSTETRSSSSESSHSSSSHSHGKTTPTKT. Ser750, Ser752, and Ser758 each carry phosphoserine; by autocatalysis. The span at 780 to 802 shows a compositional bias: polar residues; sequence LQPSNPADSNNPETLFQFSDSVA. Ser798 carries the phosphoserine modification.

Belongs to the protein kinase superfamily. AGC Ser/Thr protein kinase family. S6 kinase subfamily. Forms a complex with either MAPK1/ERK2 or MAPK3/ERK1 in quiescent cells which transiently dissociates following mitogenic stimulation. Also associates with MAPK14/p38-alpha. Activated RPS6KA5 associates with and phosphorylates the NF-kappa-B p65 subunit RELA. Interacts with CREBBP and EP300. Mg(2+) serves as cofactor. Ser-376 and Thr-581 phosphorylation is required for kinase activity. Ser-376 and Ser-212 are autophosphorylated by the C-terminal kinase domain, and their phosphorylation is essential for the catalytic activity of the N-terminal kinase domain. Phosphorylated at Ser-360, Thr-581 and Thr-700 by MAPK1/ERK2, MAPK3/ERK1 and MAPK14/p38-alpha. Autophosphorylated at Ser-750, Ser-752 and Ser-758 by the N-terminal kinase domain. In terms of processing, ubiquitinated.

Its subcellular location is the nucleus. It catalyses the reaction L-seryl-[protein] + ATP = O-phospho-L-seryl-[protein] + ADP + H(+). It carries out the reaction L-threonyl-[protein] + ATP = O-phospho-L-threonyl-[protein] + ADP + H(+). With respect to regulation, activated by phosphorylation at Ser-360, Thr-581 and Thr-700 by MAPK1/ERK2, MAPK3/ERK1 and MAPK14/p38-alpha, and by further autophosphorylation of Ser-212, Ser-376 and Ser-381 by the activated C-terminal kinase domain. The active N-terminal kinase domain finally phosphorylates downstream substrates, as well as Ser-750, Ser-752 and Ser-758 in its own C-terminal region. In terms of biological role, serine/threonine-protein kinase that is required for the mitogen or stress-induced phosphorylation of the transcription factors CREB1 and ATF1 and for the regulation of the transcription factors RELA, STAT3 and ETV1/ER81, and that contributes to gene activation by histone phosphorylation and functions in the regulation of inflammatory genes. Phosphorylates CREB1 and ATF1 in response to mitogenic or stress stimuli such as UV-C irradiation, epidermal growth factor (EGF) and anisomycin. Plays an essential role in the control of RELA transcriptional activity in response to TNF and upon glucocorticoid, associates in the cytoplasm with the glucocorticoid receptor NR3C1 and contributes to RELA inhibition and repression of inflammatory gene expression. In skeletal myoblasts is required for phosphorylation of RELA at 'Ser-276' during oxidative stress. In erythropoietin-stimulated cells, is necessary for the 'Ser-727' phosphorylation of STAT3 and regulation of its transcriptional potential. Phosphorylates ETV1/ER81 at 'Ser-191' and 'Ser-216', and thereby regulates its ability to stimulate transcription, which may be important during development and breast tumor formation. Directly represses transcription via phosphorylation of 'Ser-1' of histone H2A. Phosphorylates 'Ser-10' of histone H3 in response to mitogenics, stress stimuli and EGF, which results in the transcriptional activation of several immediate early genes, including proto-oncogenes c-fos/FOS and c-jun/JUN. May also phosphorylate 'Ser-28' of histone H3. Mediates the mitogen- and stress-induced phosphorylation of high mobility group protein 1 (HMGN1/HMG14). In lipopolysaccharide-stimulated primary macrophages, acts downstream of the Toll-like receptor TLR4 to limit the production of pro-inflammatory cytokines. Functions probably by inducing transcription of the MAP kinase phosphatase DUSP1 and the anti-inflammatory cytokine interleukin 10 (IL10), via CREB1 and ATF1 transcription factors. Plays a role in neuronal cell death by mediating the downstream effects of excitotoxic injury. Phosphorylates TRIM7 at 'Ser-107' in response to growth factor signaling via the MEK/ERK pathway, thereby stimulating its ubiquitin ligase activity. The polypeptide is Ribosomal protein S6 kinase alpha-5 (RPS6KA5) (Pongo abelii (Sumatran orangutan)).